A 417-amino-acid chain; its full sequence is Serine--tRNA ligase (417 aa).

226 to 228 is an L-serine binding site; that stretch reads TSE. ATP is bound by residues 257–259 and V273; that span reads RRE. E280 is an L-serine binding site. Residue 344-347 participates in ATP binding; it reads EVTS. T379 is a binding site for L-serine.

It belongs to the class-II aminoacyl-tRNA synthetase family. Type-1 seryl-tRNA synthetase subfamily. As to quaternary structure, homodimer. The tRNA molecule binds across the dimer.

The protein localises to the cytoplasm. The catalysed reaction is tRNA(Ser) + L-serine + ATP = L-seryl-tRNA(Ser) + AMP + diphosphate + H(+). The enzyme catalyses tRNA(Sec) + L-serine + ATP = L-seryl-tRNA(Sec) + AMP + diphosphate + H(+). Its pathway is aminoacyl-tRNA biosynthesis; selenocysteinyl-tRNA(Sec) biosynthesis; L-seryl-tRNA(Sec) from L-serine and tRNA(Sec): step 1/1. Catalyzes the attachment of serine to tRNA(Ser). Is also able to aminoacylate tRNA(Sec) with serine, to form the misacylated tRNA L-seryl-tRNA(Sec), which will be further converted into selenocysteinyl-tRNA(Sec). This chain is Serine--tRNA ligase, found in Tropheryma whipplei (strain Twist) (Whipple's bacillus).